Here is a 228-residue protein sequence, read N- to C-terminus: Probable calcium-binding protein CML48 (228 aa).

EF-hand domains follow at residues 52-87 (ETHP…SGYD) and 121-156 (NCLA…LGCV). Ca(2+)-binding residues include D65, N67, S69, and E76.

Its function is as follows. Potential calcium sensor. The chain is Probable calcium-binding protein CML48 (CML48) from Arabidopsis thaliana (Mouse-ear cress).